The following is a 112-amino-acid chain: Nucleoid-associated protein CV_1611 (112 aa).

The protein belongs to the YbaB/EbfC family. In terms of assembly, homodimer.

It localises to the cytoplasm. The protein localises to the nucleoid. In terms of biological role, binds to DNA and alters its conformation. May be involved in regulation of gene expression, nucleoid organization and DNA protection. This Chromobacterium violaceum (strain ATCC 12472 / DSM 30191 / JCM 1249 / CCUG 213 / NBRC 12614 / NCIMB 9131 / NCTC 9757 / MK) protein is Nucleoid-associated protein CV_1611.